A 394-amino-acid polypeptide reads, in one-letter code: Flavohemoprotein (394 aa).

Residues 1–136 (MLSENTINIV…LANVFIQREE (136 aa)) enclose the Globin domain. Histidine 85 contacts heme b. Active-site charge relay system residues include tyrosine 95 and glutamate 135. The tract at residues 147 to 394 (GGWRGLREFE…YECFGPHKVV (248 aa)) is reductase. The FAD-binding FR-type domain maps to 150–255 (RGLREFELVE…AAPAGDFFLD (106 aa)). FAD is bound by residues tyrosine 188 and 204 to 207 (RQYS). 268–273 (GVGLTP) is an NADP(+) binding site. An FAD-binding site is contributed by 387 to 390 (CFGP).

This sequence belongs to the globin family. Two-domain flavohemoproteins subfamily. In the C-terminal section; belongs to the flavoprotein pyridine nucleotide cytochrome reductase family. Heme b serves as cofactor. The cofactor is FAD.

It catalyses the reaction 2 nitric oxide + NADPH + 2 O2 = 2 nitrate + NADP(+) + H(+). The catalysed reaction is 2 nitric oxide + NADH + 2 O2 = 2 nitrate + NAD(+) + H(+). Its function is as follows. Is involved in NO detoxification in an aerobic process, termed nitric oxide dioxygenase (NOD) reaction that utilizes O(2) and NAD(P)H to convert NO to nitrate, which protects the bacterium from various noxious nitrogen compounds. Therefore, plays a central role in the inducible response to nitrosative stress. This is Flavohemoprotein from Vibrio vulnificus (strain CMCP6).